The sequence spans 185 residues: Nodulin-20 (185 aa).

Positions 1 to 17 (MRVVLITLFLFIGAAVA) are cleaved as a signal peptide.

This sequence belongs to the nodulin 20 family.

Its subcellular location is the symbiosome. It is found in the peribacteroid membrane. The protein resides in the peribacteroid space. This chain is Nodulin-20, found in Glycine max (Soybean).